We begin with the raw amino-acid sequence, 65 residues long: Transcriptional regulatory protein SenS (65 aa).

The H-T-H motif DNA-binding region spans 11-31 (RFRKRKTYGNQILPLELLIEK).

It to B.natto SenN.

In terms of biological role, regulates the expression of extracellular-protein genes of Bacillus subtilis. The chain is Transcriptional regulatory protein SenS (senS) from Bacillus subtilis (strain 168).